The primary structure comprises 141 residues: Venom protein family 1 protein 1 (141 aa).

An N-terminal signal peptide occupies residues 1–17 (MKSFIVVLCCLFAITYG). Residues Cys62 and Cys139 are joined by a disulfide bond.

It belongs to the insect vpf1 family. As to expression, expressed by the venom gland (posterior main gland) (at protein level).

It is found in the secreted. The sequence is that of Venom protein family 1 protein 1 from Platymeris rhadamanthus (Red spot assassin bug).